The following is a 247-amino-acid chain: uncharacterized protein (247 aa).

Helical transmembrane passes span Ile9–Phe29 and Ser37–Ile57.

It localises to the cell membrane. This is an uncharacterized protein from Methanocaldococcus jannaschii (strain ATCC 43067 / DSM 2661 / JAL-1 / JCM 10045 / NBRC 100440) (Methanococcus jannaschii).